The sequence spans 170 residues: Macro domain-containing protein DR_2288 (170 aa).

Residues 1-170 form the Macro domain; it reads MPLELVQGDI…HVFERALAQL (170 aa).

The protein belongs to the MacroD-type family.

The chain is Macro domain-containing protein DR_2288 from Deinococcus radiodurans (strain ATCC 13939 / DSM 20539 / JCM 16871 / CCUG 27074 / LMG 4051 / NBRC 15346 / NCIMB 9279 / VKM B-1422 / R1).